Here is a 1326-residue protein sequence, read N- to C-terminus: Coiled-coil domain-containing protein 171 (1326 aa).

Coiled coils occupy residues T53 to H294, A323 to Y391, S450 to K561, S597 to N630, W660 to V707, F765 to K792, F979 to V1143, and I1217 to A1241. Residues S1306–L1326 form a disordered region.

The chain is Coiled-coil domain-containing protein 171 (CCDC171) from Homo sapiens (Human).